The chain runs to 478 residues: Protein nucleotidyltransferase YdiU (478 aa).

Residues Gly84, Gly86, Arg87, Lys107, Asp119, Gly120, Arg170, and Arg177 each coordinate ATP. Residue Asp246 is the Proton acceptor of the active site. Residues Asn247 and Asp256 each coordinate Mg(2+). Asp256 is a binding site for ATP.

Belongs to the SELO family. The cofactor is Mg(2+). Requires Mn(2+) as cofactor.

The catalysed reaction is L-seryl-[protein] + ATP = 3-O-(5'-adenylyl)-L-seryl-[protein] + diphosphate. It catalyses the reaction L-threonyl-[protein] + ATP = 3-O-(5'-adenylyl)-L-threonyl-[protein] + diphosphate. The enzyme catalyses L-tyrosyl-[protein] + ATP = O-(5'-adenylyl)-L-tyrosyl-[protein] + diphosphate. It carries out the reaction L-histidyl-[protein] + UTP = N(tele)-(5'-uridylyl)-L-histidyl-[protein] + diphosphate. The catalysed reaction is L-seryl-[protein] + UTP = O-(5'-uridylyl)-L-seryl-[protein] + diphosphate. It catalyses the reaction L-tyrosyl-[protein] + UTP = O-(5'-uridylyl)-L-tyrosyl-[protein] + diphosphate. Functionally, nucleotidyltransferase involved in the post-translational modification of proteins. It can catalyze the addition of adenosine monophosphate (AMP) or uridine monophosphate (UMP) to a protein, resulting in modifications known as AMPylation and UMPylation. This chain is Protein nucleotidyltransferase YdiU, found in Escherichia coli (strain SE11).